We begin with the raw amino-acid sequence, 593 residues long: NADH-quinone oxidoreductase subunit C/D (593 aa).

Residues 1 to 184 (MTADNAIFIP…DPYSLTLAKQ (184 aa)) form an NADH dehydrogenase I subunit C region. An NADH dehydrogenase I subunit D region spans residues 208-593 (DYMFLNLGPN…IDFVMADVDR (386 aa)).

In the N-terminal section; belongs to the complex I 30 kDa subunit family. The protein in the C-terminal section; belongs to the complex I 49 kDa subunit family. In terms of assembly, NDH-1 is composed of 13 different subunits. Subunits NuoB, CD, E, F, and G constitute the peripheral sector of the complex.

It is found in the cell inner membrane. It carries out the reaction a quinone + NADH + 5 H(+)(in) = a quinol + NAD(+) + 4 H(+)(out). Functionally, NDH-1 shuttles electrons from NADH, via FMN and iron-sulfur (Fe-S) centers, to quinones in the respiratory chain. The immediate electron acceptor for the enzyme in this species is believed to be ubiquinone. Couples the redox reaction to proton translocation (for every two electrons transferred, four hydrogen ions are translocated across the cytoplasmic membrane), and thus conserves the redox energy in a proton gradient. This chain is NADH-quinone oxidoreductase subunit C/D, found in Pseudomonas putida (strain GB-1).